A 252-amino-acid chain; its full sequence is 3-dehydroquinate dehydratase (252 aa).

Residues S21, 46–48 (EWR), and R82 contribute to the 3-dehydroquinate site. H143 functions as the Proton donor/acceptor in the catalytic mechanism. K170 (schiff-base intermediate with substrate) is an active-site residue. Residues R213, S232, and Q236 each contribute to the 3-dehydroquinate site.

It belongs to the type-I 3-dehydroquinase family. Homodimer.

The enzyme catalyses 3-dehydroquinate = 3-dehydroshikimate + H2O. Its pathway is metabolic intermediate biosynthesis; chorismate biosynthesis; chorismate from D-erythrose 4-phosphate and phosphoenolpyruvate: step 3/7. In terms of biological role, involved in the third step of the chorismate pathway, which leads to the biosynthesis of aromatic amino acids. Catalyzes the cis-dehydration of 3-dehydroquinate (DHQ) and introduces the first double bond of the aromatic ring to yield 3-dehydroshikimate. The sequence is that of 3-dehydroquinate dehydratase from Salmonella dublin (strain CT_02021853).